A 114-amino-acid chain; its full sequence is UPF0145 protein TTHA1944 (114 aa).

This sequence belongs to the UPF0145 family.

In Thermus thermophilus (strain ATCC 27634 / DSM 579 / HB8), this protein is UPF0145 protein TTHA1944.